The chain runs to 355 residues: UDP-N-acetylglucosamine--N-acetylmuramyl-(pentapeptide) pyrophosphoryl-undecaprenol N-acetylglucosamine transferase (355 aa).

UDP-N-acetyl-alpha-D-glucosamine contacts are provided by residues 15 to 17 (TGG), asparagine 127, arginine 163, serine 191, isoleucine 244, 263 to 268 (ALTVSE), and glutamine 288.

Belongs to the glycosyltransferase 28 family. MurG subfamily.

The protein localises to the cell inner membrane. It carries out the reaction di-trans,octa-cis-undecaprenyl diphospho-N-acetyl-alpha-D-muramoyl-L-alanyl-D-glutamyl-meso-2,6-diaminopimeloyl-D-alanyl-D-alanine + UDP-N-acetyl-alpha-D-glucosamine = di-trans,octa-cis-undecaprenyl diphospho-[N-acetyl-alpha-D-glucosaminyl-(1-&gt;4)]-N-acetyl-alpha-D-muramoyl-L-alanyl-D-glutamyl-meso-2,6-diaminopimeloyl-D-alanyl-D-alanine + UDP + H(+). Its pathway is cell wall biogenesis; peptidoglycan biosynthesis. Cell wall formation. Catalyzes the transfer of a GlcNAc subunit on undecaprenyl-pyrophosphoryl-MurNAc-pentapeptide (lipid intermediate I) to form undecaprenyl-pyrophosphoryl-MurNAc-(pentapeptide)GlcNAc (lipid intermediate II). In Escherichia coli O127:H6 (strain E2348/69 / EPEC), this protein is UDP-N-acetylglucosamine--N-acetylmuramyl-(pentapeptide) pyrophosphoryl-undecaprenol N-acetylglucosamine transferase.